Reading from the N-terminus, the 536-residue chain is Chaperonin GroEL (536 aa).

ATP contacts are provided by residues 30–33, 86–90, Gly414, and Asp494; these read TLGP and DGTTT.

This sequence belongs to the chaperonin (HSP60) family. As to quaternary structure, forms a cylinder of 14 subunits composed of two heptameric rings stacked back-to-back. Interacts with the co-chaperonin GroES.

It is found in the cytoplasm. It carries out the reaction ATP + H2O + a folded polypeptide = ADP + phosphate + an unfolded polypeptide.. Functionally, together with its co-chaperonin GroES, plays an essential role in assisting protein folding. The GroEL-GroES system forms a nano-cage that allows encapsulation of the non-native substrate proteins and provides a physical environment optimized to promote and accelerate protein folding. The protein is Chaperonin GroEL of Methanosarcina barkeri (strain Fusaro / DSM 804).